The primary structure comprises 291 residues: Elongation factor Ts (291 aa).

Residues 80–83 (TDFV) form an involved in Mg(2+) ion dislocation from EF-Tu region.

It belongs to the EF-Ts family.

It localises to the cytoplasm. Its function is as follows. Associates with the EF-Tu.GDP complex and induces the exchange of GDP to GTP. It remains bound to the aminoacyl-tRNA.EF-Tu.GTP complex up to the GTP hydrolysis stage on the ribosome. The chain is Elongation factor Ts from Limosilactobacillus reuteri (strain DSM 20016) (Lactobacillus reuteri).